A 123-amino-acid chain; its full sequence is Gamma-synuclein (123 aa).

2 consecutive repeat copies span residues 20 to 30 (EKTKQGVTEAA) and 31 to 41 (EKTKEGVMYVG). A 4 X 11 AA tandem repeats of [EGSA]-K-T-K-[EQ]-[GQ]-V-X(4) region spans residues 20-67 (EKTKQGVTEAAEKTKEGVMYVGTKTKENVVQSVTSVAEKTKEQANAVS). A 3; approximate repeat occupies 42-56 (TKTKENVVQSVTSVA). The stretch at 57–67 (EKTKEQANAVS) is repeat 4. A phosphoserine mark is found at Ser-67 and Ser-72. The disordered stretch occupies residues 91 to 123 (TTGVVRKEDLEPPAQDQEAKEQEENEEAKSGED). The span at 107-123 (QEAKEQEENEEAKSGED) shows a compositional bias: basic and acidic residues. Ser-120 carries the phosphoserine; by BARK1, CaMK2 and CK2 modification.

This sequence belongs to the synuclein family. As to quaternary structure, may be a centrosome-associated protein. Interacts with MYOC; affects its secretion and its aggregation. Phosphorylated. Phosphorylation by GRK5 appears to occur on residues distinct from the residue phosphorylated by other kinases. Highly expressed in brain, particularly in the substantia nigra. Also expressed in the corpus callosum, heart, skeletal muscle, ovary, testis, colon and spleen. Weak expression in pancreas, kidney and lung. Expressed predominantly in the cell bodies and axons of primary sensory neurons, sympathetic neurons and motoneurons.

It localises to the cytoplasm. The protein localises to the perinuclear region. Its subcellular location is the cytoskeleton. The protein resides in the microtubule organizing center. It is found in the centrosome. It localises to the spindle. Functionally, plays a role in neurofilament network integrity. May be involved in modulating axonal architecture during development and in the adult. In vitro, increases the susceptibility of neurofilament-H to calcium-dependent proteases. May also function in modulating the keratin network in skin. Activates the MAPK and Elk-1 signal transduction pathway. The chain is Gamma-synuclein (Sncg) from Mus musculus (Mouse).